The following is a 104-amino-acid chain: L-rhamnose mutarotase (104 aa).

Y18 is a substrate binding site. H22 (proton donor) is an active-site residue. Substrate-binding positions include Y41 and 76–77 (WW).

It belongs to the rhamnose mutarotase family. In terms of assembly, homodimer.

It localises to the cytoplasm. The enzyme catalyses alpha-L-rhamnose = beta-L-rhamnose. The protein operates within carbohydrate metabolism; L-rhamnose metabolism. Involved in the anomeric conversion of L-rhamnose. The polypeptide is L-rhamnose mutarotase (Shouchella clausii (strain KSM-K16) (Alkalihalobacillus clausii)).